A 359-amino-acid polypeptide reads, in one-letter code: 3-dehydroquinate synthase (359 aa).

Residues 70–75 (DAEGGK), 104–108 (GAATD), 128–129 (TT), K141, and K150 each bind NAD(+). Positions 183, 246, and 262 each coordinate Zn(2+).

It belongs to the sugar phosphate cyclases superfamily. Dehydroquinate synthase family. It depends on Co(2+) as a cofactor. Requires Zn(2+) as cofactor. The cofactor is NAD(+).

The protein resides in the cytoplasm. It carries out the reaction 7-phospho-2-dehydro-3-deoxy-D-arabino-heptonate = 3-dehydroquinate + phosphate. The protein operates within metabolic intermediate biosynthesis; chorismate biosynthesis; chorismate from D-erythrose 4-phosphate and phosphoenolpyruvate: step 2/7. In terms of biological role, catalyzes the conversion of 3-deoxy-D-arabino-heptulosonate 7-phosphate (DAHP) to dehydroquinate (DHQ). This chain is 3-dehydroquinate synthase, found in Mycolicibacterium gilvum (strain PYR-GCK) (Mycobacterium gilvum (strain PYR-GCK)).